We begin with the raw amino-acid sequence, 585 residues long: Pentatricopeptide repeat-containing protein At4g21170 (585 aa).

PPR repeat units lie at residues 152–186, 187–221, 222–247, 252–286, 287–321, 324–358, 360–394, 396–431, 432–466, 467–501, 502–534, and 538–572; these read LSVS…RLSP, SQSA…GIVS, DELT…KLME, SCKI…KLEL, SFCS…KFVT, DSAV…ETVR, WDST…GITV, DESC…GFVP, CTHK…EVYF, DSFA…KGSL, DVNA…MKEI, and NSKS…GLKP.

Belongs to the PPR family. P subfamily.

This Arabidopsis thaliana (Mouse-ear cress) protein is Pentatricopeptide repeat-containing protein At4g21170.